The primary structure comprises 590 residues: Pentatricopeptide repeat-containing protein At2g46050, mitochondrial (590 aa).

Residues 1–109 constitute a mitochondrion transit peptide; sequence MRFTFLRSTR…RNIVTWNILI (109 aa). 11 PPR repeats span residues 141 to 175, 176 to 206, 207 to 241, 244 to 266, 275 to 305, 306 to 340, 341 to 375, 376 to 406, 407 to 437, 441 to 471, and 477 to 507; these read DHVSFMGLIRLCTDSTNMKAGIQLHCLMVKQGLES, SCFPSTSLVHFYGKCGLIVEARRVFEAVLDR, DLVLWNALVSSYVLNGMIDEAFGLLKLMGSDKNRF, DYFTFSSLLSACRIEQGKQIHAI, DIPVATALLNMYAKSNHLSDARECFESMVVR, NVVSWNAMIVGFAQNGEGREAMRLFGQMLLENLQP, DELTFASVLSSCAKFSAIWEIKQVQAMVTKKGSAD, FLSVANSLISSYSRNGNLSEALLCFHSIREP, DLVSWTSVIGALASHGFAEESLQMFESMLQK, DKITFLEVLSACSHGGLVQEGLRCFKRMTEF, and EDEHYTCLIDLLGRAGFIDEASDVLNSMPTE. Residues 512–588 form a type E motif region; it reads ALAAFTGGCN…TPGCSWLGDY (77 aa).

Belongs to the PPR family. PCMP-E subfamily.

It localises to the mitochondrion. This Arabidopsis thaliana (Mouse-ear cress) protein is Pentatricopeptide repeat-containing protein At2g46050, mitochondrial (PCMP-E39).